The primary structure comprises 256 residues: Thiazole synthase (256 aa).

Lys-95 (schiff-base intermediate with DXP) is an active-site residue. 1-deoxy-D-xylulose 5-phosphate is bound by residues Gly-156, Ala-182–Gly-183, and Asn-204–Thr-205.

It belongs to the ThiG family. In terms of assembly, homotetramer. Forms heterodimers with either ThiH or ThiS.

Its subcellular location is the cytoplasm. The catalysed reaction is [ThiS sulfur-carrier protein]-C-terminal-Gly-aminoethanethioate + 2-iminoacetate + 1-deoxy-D-xylulose 5-phosphate = [ThiS sulfur-carrier protein]-C-terminal Gly-Gly + 2-[(2R,5Z)-2-carboxy-4-methylthiazol-5(2H)-ylidene]ethyl phosphate + 2 H2O + H(+). The protein operates within cofactor biosynthesis; thiamine diphosphate biosynthesis. Catalyzes the rearrangement of 1-deoxy-D-xylulose 5-phosphate (DXP) to produce the thiazole phosphate moiety of thiamine. Sulfur is provided by the thiocarboxylate moiety of the carrier protein ThiS. In vitro, sulfur can be provided by H(2)S. The sequence is that of Thiazole synthase from Salmonella arizonae (strain ATCC BAA-731 / CDC346-86 / RSK2980).